Consider the following 527-residue polypeptide: UDP-glucuronosyltransferase 2A1 (527 aa).

Residues 1 to 20 form the signal peptide; it reads MLNNLLLFSLQISLIGTTLG. Over 21–491 the chain is Lumenal; the sequence is GNVLIWPMEG…TWFQYHSLDV (471 aa). N-linked (GlcNAc...) asparagine glycans are attached at residues asparagine 49, leucine 313, and asparagine 347. The chain crosses the membrane as a helical span at residues 492-512; it reads IGFLLVCVTTAIFLVIQCCLF. The Cytoplasmic segment spans residues 513–527; sequence SCQKFGKIGKKKKRE.

Belongs to the UDP-glycosyltransferase family. Olfactory epithelium, brain and fetal lung. Not present in liver.

The protein resides in the membrane. The protein localises to the endoplasmic reticulum membrane. The catalysed reaction is glucuronate acceptor + UDP-alpha-D-glucuronate = acceptor beta-D-glucuronoside + UDP + H(+). It carries out the reaction 16beta,17beta-estriol + UDP-alpha-D-glucuronate = 16beta,17beta-estriol 16-O-(beta-D-glucuronate) + UDP + H(+). It catalyses the reaction 16alpha,17alpha-estriol + UDP-alpha-D-glucuronate = 16alpha,17alpha-estriol 16-O-(beta-D-glucuronate) + UDP + H(+). The enzyme catalyses 17alpha-estradiol + UDP-alpha-D-glucuronate = 17alpha-estradiol 17-O-(beta-D-glucuronate) + UDP + H(+). The catalysed reaction is 17alpha-estradiol + UDP-alpha-D-glucuronate = 17alpha-estradiol 3-O-(beta-D-glucuronate) + UDP + H(+). It carries out the reaction 17beta-estradiol + UDP-alpha-D-glucuronate = 17beta-estradiol 3-O-(beta-D-glucuronate) + UDP + H(+). It catalyses the reaction 17beta-estradiol + UDP-alpha-D-glucuronate = 17beta-estradiol 17-O-(beta-D-glucuronate) + UDP + H(+). The enzyme catalyses testosterone + UDP-alpha-D-glucuronate = testosterone 17-O-(beta-D-glucuronate) + UDP + H(+). The catalysed reaction is epitestosterone + UDP-alpha-D-glucuronate = epitestosterone 17-O-(beta-D-glucuronate) + UDP + H(+). It carries out the reaction lithocholate + UDP-alpha-D-glucuronate = lithocholoyl-3-O-(beta-D-glucuronate) + UDP + H(+). It catalyses the reaction lithocholate + UDP-alpha-D-glucuronate = lithocholoyl-24-O-(beta-D-glucuronate) + UDP. The enzyme catalyses deoxycholate + UDP-alpha-D-glucuronate = deoxycholoyl-24-O-(beta-D-glucuronate) + UDP. The catalysed reaction is hyodeoxycholate + UDP-alpha-D-glucuronate = hyodeoxycholoyl-24-O-(beta-D-glucuronate) + UDP. It carries out the reaction hyocholate + UDP-alpha-D-glucuronate = hyocholoyl-24-O-(beta-D-glucuronate) + UDP. Functionally, UDP-glucuronosyltransferase (UGT) that catalyzes phase II biotransformation reactions in which lipophilic substrates are conjugated with glucuronic acid to increase the metabolite's water solubility, thereby facilitating excretion into either the urine or bile. Essential for the elimination and detoxification of drugs, xenobiotics and endogenous compounds. Catalyzes the glucuronidation of endogenous steroid hormones such as androgens (testosterone and epitestosterone) and estrogens (estradiol and epiestriol). Contributes to bile acid (BA) detoxification by catalyzing the glucuronidation of BA substrates, which are natural detergents for dietary lipids absorption. Shows a high affinity to aliphatic odorants such as citronellol as well as olfactory tissue specificity, and therefore may be involved in olfaction. Shows a potential role in detoxification of toxic waste compounds in the amniotic fluid before birth, and air-born chemical after birth. The sequence is that of UDP-glucuronosyltransferase 2A1 from Homo sapiens (Human).